Consider the following 347-residue polypeptide: UDP-3-O-acylglucosamine N-acyltransferase (347 aa).

The active-site Proton acceptor is H248.

The protein belongs to the transferase hexapeptide repeat family. LpxD subfamily. In terms of assembly, homotrimer.

It carries out the reaction a UDP-3-O-[(3R)-3-hydroxyacyl]-alpha-D-glucosamine + a (3R)-hydroxyacyl-[ACP] = a UDP-2-N,3-O-bis[(3R)-3-hydroxyacyl]-alpha-D-glucosamine + holo-[ACP] + H(+). The protein operates within bacterial outer membrane biogenesis; LPS lipid A biosynthesis. Functionally, catalyzes the N-acylation of UDP-3-O-acylglucosamine using 3-hydroxyacyl-ACP as the acyl donor. Is involved in the biosynthesis of lipid A, a phosphorylated glycolipid that anchors the lipopolysaccharide to the outer membrane of the cell. In Parasynechococcus marenigrum (strain WH8102), this protein is UDP-3-O-acylglucosamine N-acyltransferase.